A 361-amino-acid chain; its full sequence is Peptide chain release factor 1 (361 aa).

Gln236 carries the N5-methylglutamine modification. The disordered stretch occupies residues 286 to 306 (AADSQRAEARKGQVGSGDRSE).

This sequence belongs to the prokaryotic/mitochondrial release factor family. Post-translationally, methylated by PrmC. Methylation increases the termination efficiency of RF1.

It localises to the cytoplasm. In terms of biological role, peptide chain release factor 1 directs the termination of translation in response to the peptide chain termination codons UAG and UAA. This Magnetococcus marinus (strain ATCC BAA-1437 / JCM 17883 / MC-1) protein is Peptide chain release factor 1.